The following is a 337-amino-acid chain: ERI1 exoribonuclease 3 (337 aa).

The region spanning 146–320 (FLVLDFEATC…DDCKNIANIM (175 aa)) is the Exonuclease domain. Mg(2+)-binding residues include Asp150, Glu152, and Asp249. The active-site Proton acceptor is Glu152. Residue Glu152 coordinates AMP. Residue His307 is the Proton acceptor of the active site. His307 contacts AMP. Asp312 contributes to the Mg(2+) binding site.

As to quaternary structure, interacts with PRNP. Mg(2+) is required as a cofactor.

This is ERI1 exoribonuclease 3 (ERI3) from Bos taurus (Bovine).